Consider the following 337-residue polypeptide: Inositol 2-dehydrogenase (337 aa).

It belongs to the Gfo/Idh/MocA family. In terms of assembly, homotetramer.

The catalysed reaction is myo-inositol + NAD(+) = scyllo-inosose + NADH + H(+). Functionally, involved in the oxidation of myo-inositol (MI) to 2-keto-myo-inositol (2KMI or 2-inosose). The protein is Inositol 2-dehydrogenase of Klebsiella pneumoniae (strain 342).